A 401-amino-acid polypeptide reads, in one-letter code: Acetate kinase (401 aa).

Asn-9 lines the Mg(2+) pocket. Lys-16 contacts ATP. Position 88 (Arg-88) interacts with substrate. Asp-147 acts as the Proton donor/acceptor in catalysis. ATP-binding positions include 207-211 (HLGNG), 282-284 (DCR), and 333-337 (GIGEN). Residue Glu-388 coordinates Mg(2+).

This sequence belongs to the acetokinase family. In terms of assembly, homodimer. It depends on Mg(2+) as a cofactor. Mn(2+) is required as a cofactor.

The protein resides in the cytoplasm. It catalyses the reaction acetate + ATP = acetyl phosphate + ADP. It functions in the pathway metabolic intermediate biosynthesis; acetyl-CoA biosynthesis; acetyl-CoA from acetate: step 1/2. Functionally, catalyzes the formation of acetyl phosphate from acetate and ATP. Can also catalyze the reverse reaction. The polypeptide is Acetate kinase (Haemophilus influenzae (strain ATCC 51907 / DSM 11121 / KW20 / Rd)).